Consider the following 99-residue polypeptide: Large ribosomal subunit protein uL23 (99 aa).

This sequence belongs to the universal ribosomal protein uL23 family. In terms of assembly, part of the 50S ribosomal subunit. Contacts protein L29, and trigger factor when it is bound to the ribosome.

Functionally, one of the early assembly proteins it binds 23S rRNA. One of the proteins that surrounds the polypeptide exit tunnel on the outside of the ribosome. Forms the main docking site for trigger factor binding to the ribosome. This Rhodopseudomonas palustris (strain BisB5) protein is Large ribosomal subunit protein uL23.